Consider the following 489-residue polypeptide: Cytochrome P450 71A26 (489 aa).

The chain crosses the membrane as a helical span at residues 1–21 (MMIMFFLLCSIIFVVTIIIFR). Residue Cys-431 participates in heme binding.

Belongs to the cytochrome P450 family. Heme is required as a cofactor.

Its subcellular location is the membrane. The sequence is that of Cytochrome P450 71A26 (CYP71A26) from Arabidopsis thaliana (Mouse-ear cress).